A 389-amino-acid polypeptide reads, in one-letter code: Succinate--CoA ligase [ADP-forming] subunit beta (389 aa).

The region spanning 9 to 236 (KELFAKHNVP…KDATDPLELK (228 aa)) is the ATP-grasp domain. Residues lysine 45, 52–54 (GRG), serine 94, and glutamate 99 each bind ATP. Residues asparagine 191 and aspartate 205 each contribute to the Mg(2+) site. Substrate is bound by residues asparagine 256 and 318–320 (GIT).

Belongs to the succinate/malate CoA ligase beta subunit family. As to quaternary structure, heterotetramer of two alpha and two beta subunits. Mg(2+) is required as a cofactor.

It carries out the reaction succinate + ATP + CoA = succinyl-CoA + ADP + phosphate. The enzyme catalyses GTP + succinate + CoA = succinyl-CoA + GDP + phosphate. The protein operates within carbohydrate metabolism; tricarboxylic acid cycle; succinate from succinyl-CoA (ligase route): step 1/1. In terms of biological role, succinyl-CoA synthetase functions in the citric acid cycle (TCA), coupling the hydrolysis of succinyl-CoA to the synthesis of either ATP or GTP and thus represents the only step of substrate-level phosphorylation in the TCA. The beta subunit provides nucleotide specificity of the enzyme and binds the substrate succinate, while the binding sites for coenzyme A and phosphate are found in the alpha subunit. This chain is Succinate--CoA ligase [ADP-forming] subunit beta, found in Mycobacteroides abscessus (strain ATCC 19977 / DSM 44196 / CCUG 20993 / CIP 104536 / JCM 13569 / NCTC 13031 / TMC 1543 / L948) (Mycobacterium abscessus).